The chain runs to 421 residues: DNA (cytosine-5)-methyltransferase 3-like (421 aa).

A compositionally biased stretch (polar residues) spans 1-14 (MGSRETPSSCSKTL). The interval 1 to 39 (MGSRETPSSCSKTLETLDLETSDSSSPDADSPLEEQWLK) is disordered. In terms of domain architecture, ADD spans 75–207 (EVKVNRRSIE…LKAFHDQEGA (133 aa)). The GATA-type; atypical zinc finger occupies 86–116 (ICLCCGTLQVYTRHPLFEGGLCAPCKDKFLE). The segment at 127 to 183 (QSYCTICCSGGTLFICESPDCTRCYCFECVDILVGPGTSERINAMACWVCFLCLPFS) adopts a PHD-type; atypical zinc-finger fold.

As to quaternary structure, homodimer. Heterotetramer composed of 1 DNMT3A homodimer and 2 DNMT3L subunits (DNMT3L-DNMT3A-DNMT3A-DNMT3L). Interacts with histone H3 (via N-terminus); interaction is strongly inhibited by methylation at lysine 4 (H3K4me). Interacts with EZH2; the interaction is direct. Interacts with SPOCD1. As to expression, expressed in testis, thymus, ovary, and heart.

It localises to the nucleus. Functionally, catalytically inactive regulatory factor of DNA methyltransferases that can either promote or inhibit DNA methylation depending on the context. Essential for the function of DNMT3A and DNMT3B: activates DNMT3A and DNMT3B by binding to their catalytic domain. Acts by accelerating the binding of DNA and S-adenosyl-L-methionine (AdoMet) to the methyltransferases and dissociates from the complex after DNA binding to the methyltransferases. Recognizes unmethylated histone H3 lysine 4 (H3K4me0) and induces de novo DNA methylation by recruitment or activation of DNMT3. Plays a key role in embryonic stem cells and germ cells. In germ cells, required for the methylation of imprinted loci together with DNMT3A. In male germ cells, specifically required to methylate retrotransposons, preventing their mobilization. Plays a key role in embryonic stem cells (ESCs) by acting both as an positive and negative regulator of DNA methylation. While it promotes DNA methylation of housekeeping genes together with DNMT3A and DNMT3B, it also acts as an inhibitor of DNA methylation at the promoter of bivalent genes. Interacts with the EZH2 component of the PRC2/EED-EZH2 complex, preventing interaction of DNMT3A and DNMT3B with the PRC2/EED-EZH2 complex, leading to maintain low methylation levels at the promoters of bivalent genes. Promotes differentiation of ESCs into primordial germ cells by inhibiting DNA methylation at the promoter of RHOX5, thereby activating its expression. The polypeptide is DNA (cytosine-5)-methyltransferase 3-like (Dnmt3l) (Mus musculus (Mouse)).